A 410-amino-acid polypeptide reads, in one-letter code: Solute carrier family 52, riboflavin transporter, member 3 (410 aa).

A run of 3 helical transmembrane segments spans residues 3–23 (ILIY…INGL), 40–60 (LPSY…LVTL), and 73–93 (VVIY…AFFL). Asn157 carries N-linked (GlcNAc...) asparagine glycosylation. A run of 6 helical transmembrane segments spans residues 158–178 (FTTE…LAAF), 239–259 (FQLT…NGLL), 277–297 (LSAA…MFFP), 301–321 (LVFL…NMAM), 334–354 (ALGE…LSYV), and 369–389 (ALVW…VIMF).

The protein belongs to the riboflavin transporter family.

It localises to the cell membrane. The catalysed reaction is riboflavin(in) = riboflavin(out). Functionally, plasma membrane transporter mediating the uptake by cells of the water soluble vitamin B2/riboflavin that plays a key role in biochemical oxidation-reduction reactions of the carbohydrate, lipid, and amino acid metabolism. In Osmerus mordax (Rainbow smelt), this protein is Solute carrier family 52, riboflavin transporter, member 3 (slc52a3).